The sequence spans 446 residues: Exodeoxyribonuclease 7 large subunit (446 aa).

It belongs to the XseA family. In terms of assembly, heterooligomer composed of large and small subunits.

It localises to the cytoplasm. The enzyme catalyses Exonucleolytic cleavage in either 5'- to 3'- or 3'- to 5'-direction to yield nucleoside 5'-phosphates.. Functionally, bidirectionally degrades single-stranded DNA into large acid-insoluble oligonucleotides, which are then degraded further into small acid-soluble oligonucleotides. This is Exodeoxyribonuclease 7 large subunit from Streptococcus pyogenes serotype M6 (strain ATCC BAA-946 / MGAS10394).